An 842-amino-acid chain; its full sequence is Oleate activated transcription factor 3 (842 aa).

The segment at residues 22–50 (CTNCKRRKSKCDRQNPCSNCVRFGNKDTC) is a DNA-binding region (zn(2)-C6 fungal-type). The tract at residues 55–101 (NPKNTESQHGEDTDNKVKKQQPQMIKGKRNGTSSSIVGSKASSISPT) is disordered. Over residues 60–71 (ESQHGEDTDNKV) the composition is skewed to basic and acidic residues. Positions 87–99 (SSSIVGSKASSIS) are enriched in low complexity.

It belongs to the OAF3 family.

It is found in the cytoplasm. It localises to the nucleus. Its subcellular location is the mitochondrion. In terms of biological role, transcriptional inhibitor with a significantly increased number of target genes in response to oleate. In Zygosaccharomyces rouxii (strain ATCC 2623 / CBS 732 / NBRC 1130 / NCYC 568 / NRRL Y-229), this protein is Oleate activated transcription factor 3 (OAF3).